Consider the following 64-residue polypeptide: Large ribosomal subunit protein bL33c (64 aa).

It belongs to the bacterial ribosomal protein bL33 family.

Its subcellular location is the plastid. The protein resides in the organellar chromatophore. The chain is Large ribosomal subunit protein bL33c from Paulinella chromatophora.